The primary structure comprises 337 residues: MNITDEGTPVLILNAGGITLGTESRKTMENHDRVEENRNITKALCALINSGEGKVKAHIKNPDYILSKHGIGEDLETSFKNILPSRPLDFKQYQSYFFICVEKSQSPDVSVGKPATIATNLYMRNGASSVEMNLDAAQKFLDNIKVAGGRSPSARPSDRPGDDTQEEGHIQELAAAFFKQSKLTKKENFLFSESKNVEYKSFETKKLLQRVKEILPRTVSAFANTDGGYLFIGLDEKKQEIVGFEAKNCQPKCLESEIEKCIQQLPVTHFCEEREKIKYKCKFIEVHDSGVVCKYVCALRVERFCCAVFAAEPESWHMKDGGVKRFTIEEWIKLLMS.

Residues 147 to 166 (AGGRSPSARPSDRPGDDTQE) form a disordered region. The span at 156-166 (PSDRPGDDTQE) shows a compositional bias: basic and acidic residues.

Belongs to the Schlafen family. Interacts with DNAJB6; promoting nuclear translocation and ability to promote cell-cycle arrest. As to expression, mainly expressed in the thymus, lymph node and spleen. Specifically expressed in T-lineage cells, but not in B-cells. Strongly up-regulated during the differentiation from CD4(+)CD8(+) double-positive (DP) to CD4(+) or CD8(+) single-positive (SP) thymocytes. Highly expressed in quiescent single-positive thymocytes and T-cells. The expression substantially decreases after TCR (T-cell receptor)-mediated activation.

Its subcellular location is the cytoplasm. It localises to the nucleus. Its function is as follows. Protein expressed in resting T-cells, which is required for maintaining T-cells in the quiescent state. Acts by promoting cell-cycle arrest of T-cells through inhibiting the expression of cyclin-D1 (CCND1). The polypeptide is Schlafen family member 1 (Mus musculus (Mouse)).